A 634-amino-acid chain; its full sequence is Serine/threonine kinase NLK (634 aa).

Positions 240–531 (SQPDRPIGYG…VEEALQHRYL (292 aa)) constitute a Protein kinase domain. ATP contacts are provided by residues 246 to 254 (IGYGAFGVV) and K269. D366 (proton acceptor) is an active-site residue.

Belongs to the protein kinase superfamily. CMGC Ser/Thr protein kinase family. MAP kinase subfamily. Component of the beta-catenin-lit-1 complex (also called the lit-1/wrm-1 complex or the wrm-1/lit-1 kinase complex) at least composed of lit-1 and wrm-1. Interacts with wrm-1 (via N-terminus); the interaction is direct and activates lit-1 kinase activity which leads to the phosphorylation of pop-1. This promotes pop-1 interaction with par-5 and translocation of pop-1 from the nucleus to the cytoplasm. Interacts with pop-1 (when phosphorylated on 'Ser-118' and 'Ser-127'); the interaction is dependent on the beta-catenin-lit-1 complex. Mg(2+) is required as a cofactor. As to expression, expressed in the pharynx and seam and vulval cells.

The protein resides in the cytoplasm. The protein localises to the cell cortex. Its subcellular location is the nucleus. The catalysed reaction is L-seryl-[protein] + ATP = O-phospho-L-seryl-[protein] + ADP + H(+). It catalyses the reaction L-threonyl-[protein] + ATP = O-phospho-L-threonyl-[protein] + ADP + H(+). Has a role in the Wnt signaling pathway controlling the asymmetry of cell divisions during embryogenesis. Operates in the AB and EMS cell lineages influencing cell specification. Required for body wall muscle development, endoderm development, pop-1 asymmetry and T-cell division asymmetry. Component of the beta-catenin-lit-1 complex which promotes the phosphorylation, down-regulation and subcellular relocation of pop-1. Regulates plp-1 nuclear localization in embryos. Plays a role in male tail tip morphogenesis. The chain is Serine/threonine kinase NLK from Caenorhabditis elegans.